A 103-amino-acid polypeptide reads, in one-letter code: ATP synthase F(0) complex subunit g, mitochondrial (103 aa).

A2 carries the N-acetylalanine modification. Residues K11, K24, and K54 each carry the N6-acetyllysine modification.

Belongs to the ATPase g subunit family. In terms of assembly, component of the ATP synthase complex composed at least of ATP5F1A/subunit alpha, ATP5F1B/subunit beta, ATP5MC1/subunit c (homooctomer), MT-ATP6/subunit a, MT-ATP8/subunit 8, ATP5ME/subunit e, ATP5MF/subunit f, ATP5MG/subunit g, ATP5MK/subunit k, ATP5MJ/subunit j, ATP5F1C/subunit gamma, ATP5F1D/subunit delta, ATP5F1E/subunit epsilon, ATP5PF/subunit F6, ATP5PB/subunit b, ATP5PD/subunit d, ATP5PO/subunit OSCP. ATP synthase complex consists of a soluble F(1) head domain (subunits alpha(3) and beta(3)) - the catalytic core - and a membrane F(0) domain - the membrane proton channel (subunits c, a, 8, e, f, g, k and j). These two domains are linked by a central stalk (subunits gamma, delta, and epsilon) rotating inside the F1 region and a stationary peripheral stalk (subunits F6, b, d, and OSCP).

It localises to the mitochondrion. The protein resides in the mitochondrion inner membrane. Its function is as follows. Subunit g, of the mitochondrial membrane ATP synthase complex (F(1)F(0) ATP synthase or Complex V) that produces ATP from ADP in the presence of a proton gradient across the membrane which is generated by electron transport complexes of the respiratory chain. ATP synthase complex consist of a soluble F(1) head domain - the catalytic core - and a membrane F(1) domain - the membrane proton channel. These two domains are linked by a central stalk rotating inside the F(1) region and a stationary peripheral stalk. During catalysis, ATP synthesis in the catalytic domain of F(1) is coupled via a rotary mechanism of the central stalk subunits to proton translocation. In vivo, can only synthesize ATP although its ATP hydrolase activity can be activated artificially in vitro. Part of the complex F(0) domain. This is ATP synthase F(0) complex subunit g, mitochondrial from Rattus norvegicus (Rat).